A 472-amino-acid polypeptide reads, in one-letter code: Chromosomal replication initiator protein DnaA (472 aa).

The interval 1–73 is domain I, interacts with DnaA modulators; that stretch reads MSNMEHDRWS…LTCWQAELPE (73 aa). Positions 73-128 are domain II; it reads EVCRIDLTVRSPMRAAVAKEAAAPVEHRRAEHRPATETRSHATVPASSNHDALGGS. The interval 92-127 is disordered; it reads EAAAPVEHRRAEHRPATETRSHATVPASSNHDALGG. Over residues 97-112 the composition is skewed to basic and acidic residues; it reads VEHRRAEHRPATETRS. A domain III, AAA+ region region spans residues 129–351; it reads PLDPRLTFAS…GAINRLLAHS (223 aa). 4 residues coordinate ATP: glycine 176, glycine 178, lysine 179, and threonine 180. The tract at residues 352 to 472 is domain IV, binds dsDNA; it reads KLNAQPVTLE…VDSLKRQLQE (121 aa).

It belongs to the DnaA family. Oligomerizes as a right-handed, spiral filament on DNA at oriC.

Its subcellular location is the cytoplasm. Its function is as follows. Plays an essential role in the initiation and regulation of chromosomal replication. ATP-DnaA binds to the origin of replication (oriC) to initiate formation of the DNA replication initiation complex once per cell cycle. Binds the DnaA box (a 9 base pair repeat at the origin) and separates the double-stranded (ds)DNA. Forms a right-handed helical filament on oriC DNA; dsDNA binds to the exterior of the filament while single-stranded (ss)DNA is stabiized in the filament's interior. The ATP-DnaA-oriC complex binds and stabilizes one strand of the AT-rich DNA unwinding element (DUE), permitting loading of DNA polymerase. After initiation quickly degrades to an ADP-DnaA complex that is not apt for DNA replication. Binds acidic phospholipids. This Rhodopseudomonas palustris (strain HaA2) protein is Chromosomal replication initiator protein DnaA.